The primary structure comprises 819 residues: Sulfate permease 2 (819 aa).

The N-linked (GlcNAc...) asparagine glycan is linked to N24. Transmembrane regions (helical) follow at residues 72–92 (YNLTWLLGDFIAGVTVGFVVV), 104–124 (LAPEYGLYTSFVGFVLYWAFA), 129–149 (ITIGAVAVMSTIVGNIIANVQ), 172–192 (LLFLGLIRFGFIVEFIPIVAI), 194–214 (AFMTGSAISIAAGQVSTLMGI), 273–293 (FFVSTLRMVFIIILYILVSWL), 328–348 (ILSAISGDIPTTILVLLIEHI), 365–385 (SQELVAIGFTNLLGPFLGGYP), 454–474 (FWLTSPLEVVIFFAGVFVSIF), and 477–497 (IENGIYVTVAASGAVLLWRIA). Residues 551–708 (ELQISTPWPG…ENHKGGVQEV (158 aa)) enclose the STAS domain. N581 is a glycosylation site (N-linked (GlcNAc...) asparagine). Positions 726–766 (EAVPVGTSGSGSTDEKRPEGEGGATNGGMEKGSANGEDIST) are disordered. Gly residues predominate over residues 746–755 (EGGATNGGME).

It belongs to the SLC26A/SulP transporter (TC 2.A.53) family. In terms of tissue distribution, mainly found in mycelia.

The protein localises to the membrane. In terms of biological role, uptake of sulfate into the cell. The chain is Sulfate permease 2 (cys-14) from Neurospora crassa (strain ATCC 24698 / 74-OR23-1A / CBS 708.71 / DSM 1257 / FGSC 987).